The chain runs to 484 residues: Ornithine decarboxylase (484 aa).

Residue K114 is modified to N6-(pyridoxal phosphate)lysine. Residues S245, G282, and E315–R318 contribute to the pyridoxal 5'-phosphate site. Substrate is bound at residue F381–D382. The active-site Proton donor; shared with dimeric partner is the C422. Position 423 (D423) interacts with substrate. Y452 serves as a coordination point for pyridoxal 5'-phosphate.

This sequence belongs to the Orn/Lys/Arg decarboxylase class-II family. As to quaternary structure, homodimer. Only the dimer is catalytically active, as the active sites are constructed of residues from both monomers. It depends on pyridoxal 5'-phosphate as a cofactor.

The protein localises to the cytoplasm. The catalysed reaction is L-ornithine + H(+) = putrescine + CO2. The protein operates within amine and polyamine biosynthesis; putrescine biosynthesis via L-ornithine pathway; putrescine from L-ornithine: step 1/1. With respect to regulation, inhibited by antizyme (AZ) OAZ1 in response to polyamine levels. AZ inhibits the assembly of the functional homodimer by binding to ODC monomers and targeting them for ubiquitin-independent proteolytic destruction by the 26S proteasome. Its function is as follows. Catalyzes the first and rate-limiting step of polyamine biosynthesis that converts ornithine into putrescine, which is the precursor for the polyamines, spermidine and spermine. Polyamines are essential for cell proliferation and are implicated in cellular processes, ranging from DNA replication to apoptosis. This Neurospora crassa (strain ATCC 24698 / 74-OR23-1A / CBS 708.71 / DSM 1257 / FGSC 987) protein is Ornithine decarboxylase (spe-1).